Reading from the N-terminus, the 165-residue chain is Large ribosomal subunit protein uL10 (165 aa).

Lys-37 and Lys-105 each carry N6-acetyllysine.

It belongs to the universal ribosomal protein uL10 family. As to quaternary structure, part of the ribosomal stalk of the 50S ribosomal subunit. The N-terminus interacts with L11 and the large rRNA to form the base of the stalk. The C-terminus forms an elongated spine to which L12 dimers bind in a sequential fashion forming a multimeric L10(L12)X complex.

Functionally, protein L10 is also a translational repressor protein. It controls the translation of the rplJL-rpoBC operon by binding to its mRNA. In terms of biological role, forms part of the ribosomal stalk, playing a central role in the interaction of the ribosome with GTP-bound translation factors. This Escherichia coli O6:H1 (strain CFT073 / ATCC 700928 / UPEC) protein is Large ribosomal subunit protein uL10 (rplJ).